A 2564-amino-acid chain; its full sequence is Histone-lysine N-methyltransferase SETD2 (2564 aa).

Positions Met1–Lys11 are enriched in pro residues. Residues Met1–Ala30 form a disordered region. Over residues Asp17 to Ala30 the composition is skewed to basic and acidic residues. Ser131 carries the phosphoserine modification. Disordered stretches follow at residues Ser180–Pro211, Asn272–Lys561, and Pro607–Thr626. The segment covering Pro187–Ala197 has biased composition (pro residues). Residues Gln198–Pro207 show a composition bias toward low complexity. Positions Ser278 to Glu290 are enriched in basic and acidic residues. Phosphoserine occurs at positions 321, 323, and 344. Basic and acidic residues-rich tracts occupy residues Arg335–Arg400, Arg421–Arg432, Pro439–Lys467, and Ser479–Lys528. A Glycyl lysine isopeptide (Lys-Gly) (interchain with G-Cter in SUMO2) cross-link involves residue Lys359. A Phosphoserine modification is found at Ser422. Residues Ser532, Ser614, and Ser624 each carry the phosphoserine modification. Residues Ala616 to Pro625 are compositionally biased toward polar residues. Thr626 carries the post-translational modification Phosphothreonine. Lys637 participates in a covalent cross-link: Glycyl lysine isopeptide (Lys-Gly) (interchain with G-Cter in SUMO2). Phosphoserine occurs at positions 698, 708, 744, and 754. Lys776 is covalently cross-linked (Glycyl lysine isopeptide (Lys-Gly) (interchain with G-Cter in SUMO2)). Disordered stretches follow at residues Glu964–Asp995, Glu1036–Trp1101, Leu1133–Thr1233, Gln1264–Gln1352, and Leu1393–Ala1443. Residues Pro971 to Asp994 are compositionally biased toward basic and acidic residues. The segment covering Ser1045–Asp1058 has biased composition (acidic residues). The span at Ser1084 to Arg1095 shows a compositional bias: low complexity. At Ser1098 the chain carries Phosphoserine. Residues His1162–Thr1171 show a composition bias toward polar residues. The segment covering Ser1172–Lys1191 has biased composition (basic and acidic residues). The segment covering Lys1215–Arg1225 has biased composition (polar residues). Ser1228 is subject to Phosphoserine. The span at Glu1265–Ser1276 shows a compositional bias: polar residues. The segment covering Leu1393–Pro1403 has biased composition (basic and acidic residues). 3 positions are modified to phosphoserine: Ser1413, Ser1415, and Ser1417. The tract at residues Asp1418–Ser1714 is interaction with TUBA1A. Residues Leu1421–Val1431 show a composition bias toward basic and acidic residues. The region spanning Ile1494–Gln1548 is the AWS domain. Residues Cys1499, Cys1501, Cys1516, Cys1520, Cys1529, Cys1533, and Cys1539 each coordinate Zn(2+). The SET domain occupies Ala1550–Gln1667. S-adenosyl-L-methionine-binding positions include Lys1560 to Trp1562, His1603 to Tyr1605, and Asn1628 to His1629. Cys1631 is a Zn(2+) binding site. The region spanning Glu1674–Gly1690 is the Post-SET domain. Gln1676 contributes to the S-adenosyl-L-methionine binding site. Residue Cys1678 coordinates Zn(2+). Position 1679 (Phe1679) interacts with S-adenosyl-L-methionine. Residues Cys1680 and Cys1685 each contribute to the Zn(2+) site. 3 positions are modified to phosphoserine: Ser1696, Ser1844, and Ser1845. The disordered stretch occupies residues Lys1831–Thr1872. Residues Ser1844–Glu1867 show a composition bias toward polar residues. 2 positions are modified to phosphothreonine: Thr1853 and Thr1872. At Ser1888 the chain carries Phosphoserine. Residues Glu1921–Gln2142 form a disordered region. Positions Gln1924–Glu1935 are enriched in low complexity. At Ser1952 the chain carries Phosphoserine. A compositionally biased stretch (basic and acidic residues) spans Ile1960–Glu1972. Residues Pro1973–Val1990 are compositionally biased toward acidic residues. Ser1980, Ser1988, and Ser1995 each carry phosphoserine. Basic and acidic residues-rich tracts occupy residues Glu1991–Asp2004, Asp2014–Gly2046, and Arg2059–Lys2072. 2 positions are modified to phosphoserine: Ser2080 and Ser2082. 2 stretches are compositionally biased toward basic and acidic residues: residues Arg2090–Asp2100 and Lys2111–Gln2135. Residues Ser2117–Met2146 adopt a coiled-coil conformation. The tract at residues Gln2137–Pro2366 is low charge region. In terms of domain architecture, WW spans Ile2389–Trp2422. The interval Leu2439–Glu2465 is disordered. Positions Thr2457 to Glu2564 are interaction with POLR2A.

The protein belongs to the class V-like SAM-binding methyltransferase superfamily. Histone-lysine methyltransferase family. SET2 subfamily. Specifically interacts with hyperphosphorylated C-terminal domain (CTD) of RNA polymerase II large subunit (POLR2A): binds to CTD heptad repeats doubly phosphorylated on 'Ser-2' and 'Ser-5' of each heptad. Interacts with HTT. Interacts with IWS1. Interacts with p53/TP53; leading to regulate p53/TP53 target genes. Component of a complex with HNRNPL. Interacts with TUBA1A; the interaction is independent on alpha-tubulin acetylation on 'Lys-40'. Interacts with STAT1. Post-translationally, may be automethylated. In terms of tissue distribution, ubiquitously expressed.

The protein resides in the nucleus. It is found in the chromosome. The enzyme catalyses L-lysyl(36)-[histone H3] + 3 S-adenosyl-L-methionine = N(6),N(6),N(6)-trimethyl-L-lysyl(36)-[histone H3] + 3 S-adenosyl-L-homocysteine + 3 H(+). It carries out the reaction L-lysyl-[protein] + S-adenosyl-L-methionine = N(6)-methyl-L-lysyl-[protein] + S-adenosyl-L-homocysteine + H(+). It catalyses the reaction L-lysyl-[protein] + 3 S-adenosyl-L-methionine = N(6),N(6),N(6)-trimethyl-L-lysyl-[protein] + 3 S-adenosyl-L-homocysteine + 3 H(+). Specifically inhibited by sinefungin derivatives. N-propyl sinefungin (Pr-SNF) interacts preferentially with SETD2. Functionally, histone methyltransferase that specifically trimethylates 'Lys-36' of histone H3 (H3K36me3) using dimethylated 'Lys-36' (H3K36me2) as substrate. It is capable of trimethylating unmethylated H3K36 (H3K36me0) in vitro. Represents the main enzyme generating H3K36me3, a specific tag for epigenetic transcriptional activation. Plays a role in chromatin structure modulation during elongation by coordinating recruitment of the FACT complex and by interacting with hyperphosphorylated POLR2A. Acts as a key regulator of DNA mismatch repair in G1 and early S phase by generating H3K36me3, a mark required to recruit MSH6 subunit of the MutS alpha complex: early recruitment of the MutS alpha complex to chromatin to be replicated allows a quick identification of mismatch DNA to initiate the mismatch repair reaction. Required for DNA double-strand break repair in response to DNA damage: acts by mediating formation of H3K36me3, promoting recruitment of RAD51 and DNA repair via homologous recombination (HR). Acts as a tumor suppressor. H3K36me3 also plays an essential role in the maintenance of a heterochromatic state, by recruiting DNA methyltransferase DNMT3A. H3K36me3 is also enhanced in intron-containing genes, suggesting that SETD2 recruitment is enhanced by splicing and that splicing is coupled to recruitment of elongating RNA polymerase. Required during angiogenesis. Required for endoderm development by promoting embryonic stem cell differentiation toward endoderm: acts by mediating formation of H3K36me3 in distal promoter regions of FGFR3, leading to regulate transcription initiation of FGFR3. In addition to histones, also mediates methylation of other proteins, such as tubulins and STAT1. Trimethylates 'Lys-40' of alpha-tubulins such as TUBA1B (alpha-TubK40me3); alpha-TubK40me3 is required for normal mitosis and cytokinesis and may be a specific tag in cytoskeletal remodeling. Involved in interferon-alpha-induced antiviral defense by mediating both monomethylation of STAT1 at 'Lys-525' and catalyzing H3K36me3 on promoters of some interferon-stimulated genes (ISGs) to activate gene transcription. In terms of biological role, (Microbial infection) Recruited to the promoters of adenovirus 12 E1A gene in case of infection, possibly leading to regulate its expression. In Homo sapiens (Human), this protein is Histone-lysine N-methyltransferase SETD2 (SETD2).